A 458-amino-acid chain; its full sequence is MAGSPSRAAGRRLQLPLLCLFLQGATAVLFAVFVRYNHKTDAALWHRSNHSNADNEFYFRYPSFQDVHAMVFVGFGFLMVFLQRYGFSSVGFTFLLAAFALQWSTLVQGFLHSFHGGHIHVGVESMINADFCAGAVLISFGAVLGKTGPAQLLLMALLEVVLFGINEFVLLHLLGVRDAGGSMTIHTFGAYFGLVLSRVLYRPQLEKSKHRQGSVYHSDLFAMIGTIFLWIFWPSFNAALTALGAGQHRTALNTYYSLAASTLGTFALSALVGEDGRLDMVHIQNAALAGGVVVGTSSEMMLTPFGALTAGFLAGTVSTLGYKFFRPILESKFKVQDTCGVHNLHGMPGVLGALLGVLVAGLATHEAYGDGLESVFPLIAEGQRSATSQAMHQLFGLFVTLMFASVGGGLGGLLLKLPFLDSPPDSQCYEDQVHWQVPGEHEDKAQRPLRVEEADTQA.

Residues 1–13 (MAGSPSRAAGRRL) are Cytoplasmic-facing. Residues 14-34 (QLPLLCLFLQGATAVLFAVFV) form a helical membrane-spanning segment. The Extracellular segment spans residues 35–61 (RYNHKTDAALWHRSNHSNADNEFYFRY). An N-linked (GlcNAc...) asparagine glycan is attached at N49. The chain crosses the membrane as a helical span at residues 62-82 (PSFQDVHAMVFVGFGFLMVFL). The Cytoplasmic segment spans residues 83–86 (QRYG). The helical transmembrane segment at 87–107 (FSSVGFTFLLAAFALQWSTLV) threads the bilayer. Topologically, residues 108-124 (QGFLHSFHGGHIHVGVE) are extracellular. Residues 125–145 (SMINADFCAGAVLISFGAVLG) form a helical membrane-spanning segment. Topologically, residues 146–149 (KTGP) are cytoplasmic. A helical transmembrane segment spans residues 150-170 (AQLLLMALLEVVLFGINEFVL). Over 171 to 178 (LHLLGVRD) the chain is Extracellular. Residues 179 to 201 (AGGSMTIHTFGAYFGLVLSRVLY) traverse the membrane as a helical segment. Topologically, residues 202-219 (RPQLEKSKHRQGSVYHSD) are cytoplasmic. The helical transmembrane segment at 220–240 (LFAMIGTIFLWIFWPSFNAAL) threads the bilayer. Over 241–251 (TALGAGQHRTA) the chain is Extracellular. A helical membrane pass occupies residues 252–272 (LNTYYSLAASTLGTFALSALV). The Cytoplasmic segment spans residues 273–282 (GEDGRLDMVH). Residues 283–303 (IQNAALAGGVVVGTSSEMMLT) form a helical membrane-spanning segment. A topological domain (extracellular) is located at residue P304. A helical transmembrane segment spans residues 305 to 325 (FGALTAGFLAGTVSTLGYKFF). Topologically, residues 326–346 (RPILESKFKVQDTCGVHNLHG) are cytoplasmic. The helical transmembrane segment at 347–367 (MPGVLGALLGVLVAGLATHEA) threads the bilayer. Topologically, residues 368 to 393 (YGDGLESVFPLIAEGQRSATSQAMHQ) are extracellular. A helical membrane pass occupies residues 394-414 (LFGLFVTLMFASVGGGLGGLL). Residues 415–458 (LKLPFLDSPPDSQCYEDQVHWQVPGEHEDKAQRPLRVEEADTQA) lie on the Cytoplasmic side of the membrane. Residues 416–424 (KLPFLDSPP) are interaction with ANK3. A Basolateral sorting signal motif is present at residues 429-432 (YEDQ). Residues 439–458 (GEHEDKAQRPLRVEEADTQA) are disordered.

The protein belongs to the ammonium transporter (TC 2.A.49) family. Rh subfamily. Interacts (via C-terminus) with ANK2 and ANK3; required for targeting to the basolateral membrane. N-glycosylated.

It is found in the cell membrane. The protein resides in the basolateral cell membrane. It catalyses the reaction NH4(+)(in) = NH4(+)(out). The catalysed reaction is methylamine(out) = methylamine(in). It carries out the reaction CO2(out) = CO2(in). In terms of biological role, ammonium transporter involved in the maintenance of acid-base homeostasis. Transports ammonium and its related derivative methylammonium across the basolateral plasma membrane of epithelial cells likely contributing to renal transepithelial ammonia transport and ammonia metabolism. May transport either NH4(+) or NH3 ammonia species predominantly mediating an electrogenic NH4(+) transport. May act as a CO2 channel providing for renal acid secretion. This Pan troglodytes (Chimpanzee) protein is Ammonium transporter Rh type B (RHBG).